The sequence spans 217 residues: tRNA (guanine-N(7)-)-methyltransferase (217 aa).

S-adenosyl-L-methionine contacts are provided by E43, D68, N101, and N123. Residue K127 participates in substrate binding. The segment at 129-134 is interaction with RNA; the sequence is RHNKRR. Substrate-binding positions include D159 and 196–199; that span reads TEYE.

This sequence belongs to the class I-like SAM-binding methyltransferase superfamily. TrmB family.

It carries out the reaction guanosine(46) in tRNA + S-adenosyl-L-methionine = N(7)-methylguanosine(46) in tRNA + S-adenosyl-L-homocysteine. Its pathway is tRNA modification; N(7)-methylguanine-tRNA biosynthesis. Functionally, catalyzes the formation of N(7)-methylguanine at position 46 (m7G46) in tRNA. This chain is tRNA (guanine-N(7)-)-methyltransferase, found in Clostridium botulinum (strain 657 / Type Ba4).